A 316-amino-acid chain; its full sequence is Apolipoprotein E (316 aa).

Residues M1 to A18 form the signal peptide. T32 is a glycosylation site (O-linked (GalNAc...) threonine). Tandem repeats lie at residues A79–G100, P101–G122, S123–G144, Q145–L166, R167–E188, R189–A210, T211–H232, and G233–E254. The segment at A79–E254 is 8 X 22 AA approximate tandem repeats. Residue M142 is modified to Methionine sulfoxide. S146 carries the post-translational modification Phosphoserine. The interval H157–R167 is LDL and other lipoprotein receptors binding. L161–R164 provides a ligand contact to heparin. The tract at residues A209–M289 is lipid-binding and lipoprotein association. Residue T211 is glycosylated (O-linked (GalNAc...) threonine). R228–L235 is a binding site for heparin. The interval N265–H316 is homooligomerization. Residues R277–M289 are specificity for association with VLDL. O-linked (GalNAc...) threonine glycosylation is present at T309. S310 carries O-linked (GalNAc...) serine glycosylation.

This sequence belongs to the apolipoprotein A1/A4/E family. Homotetramer. May interact with ABCA1; functionally associated with ABCA1 in the biogenesis of HDLs. May interact with APP/A4 amyloid-beta peptide; the interaction is extremely stable in vitro but its physiological significance is unclear. May interact with MAPT. May interact with MAP2. In the cerebrospinal fluid, interacts with secreted SORL1. Interacts with PMEL; this allows the loading of PMEL luminal fragment on ILVs to induce fibril nucleation. Post-translationally, APOE exists as multiple glycosylated and sialylated glycoforms within cells and in plasma. The extent of glycosylation and sialylation are tissue and context specific. In terms of processing, glycated in plasma VLDL. Phosphorylated by FAM20C in the extracellular medium.

It is found in the secreted. It localises to the extracellular space. The protein resides in the extracellular matrix. Its subcellular location is the extracellular vesicle. The protein localises to the endosome. It is found in the multivesicular body. APOE is an apolipoprotein, a protein associating with lipid particles, that mainly functions in lipoprotein-mediated lipid transport between organs via the plasma and interstitial fluids. APOE is a core component of plasma lipoproteins and is involved in their production, conversion and clearance. Apolipoproteins are amphipathic molecules that interact both with lipids of the lipoprotein particle core and the aqueous environment of the plasma. As such, APOE associates with chylomicrons, chylomicron remnants, very low density lipoproteins (VLDL) and intermediate density lipoproteins (IDL) but shows a preferential binding to high-density lipoproteins (HDL). It also binds a wide range of cellular receptors including the LDL receptor/LDLR and the very low-density lipoprotein receptor/VLDLR that mediate the cellular uptake of the APOE-containing lipoprotein particles. Finally, APOE also has a heparin-binding activity and binds heparan-sulfate proteoglycans on the surface of cells, a property that supports the capture and the receptor-mediated uptake of APOE-containing lipoproteins by cells. The chain is Apolipoprotein E (APOE) from Bos taurus (Bovine).